Reading from the N-terminus, the 63-residue chain is Large ribosomal subunit protein uL29 (63 aa).

The protein belongs to the universal ribosomal protein uL29 family.

This Listeria innocua serovar 6a (strain ATCC BAA-680 / CLIP 11262) protein is Large ribosomal subunit protein uL29.